Consider the following 139-residue polypeptide: ATP synthase epsilon chain (139 aa).

This sequence belongs to the ATPase epsilon chain family. F-type ATPases have 2 components, CF(1) - the catalytic core - and CF(0) - the membrane proton channel. CF(1) has five subunits: alpha(3), beta(3), gamma(1), delta(1), epsilon(1). CF(0) has three main subunits: a, b and c.

The protein localises to the cell inner membrane. Its function is as follows. Produces ATP from ADP in the presence of a proton gradient across the membrane. This is ATP synthase epsilon chain from Alcanivorax borkumensis (strain ATCC 700651 / DSM 11573 / NCIMB 13689 / SK2).